The sequence spans 268 residues: CCAAT/enhancer-binding protein delta (268 aa).

3 disordered regions span residues 1–48, 97–132, and 152–219; these read MSAA…LGST, GLEL…DAPG, and AAQP…NQEM. An N-acetylserine modification is found at serine 2. Lysine 120 participates in a covalent cross-link: Glycyl lysine isopeptide (Lys-Gly) (interchain with G-Cter in SUMO). Pro residues predominate over residues 155–167; the sequence is PTPPTSPEPPRGS. Over residues 177-201 the composition is skewed to basic and acidic residues; the sequence is VREKGAGKRGPDRGSPEYRQRRERN. In terms of domain architecture, bZIP spans 191 to 254; it reads SPEYRQRRER…AGLRQFFKKL (64 aa). The tract at residues 195–222 is basic motif; sequence RQRRERNNIAVRKSRDKAKRRNQEMQQK. A leucine-zipper region spans residues 226 to 254; that stretch reads LSAENEKLHQRVEQLTRDLAGLRQFFKKL.

Belongs to the bZIP family. C/EBP subfamily. In terms of assembly, binds DNA as a homodimer and as a heterodimer. Can form stable heterodimers with CEBPA, CEBPB and CEBPE. Directly interacts with SPI1/PU.1; this interaction does not affect DNA-binding properties of each partner. Interacts with PRDM16.

It localises to the nucleus. Functionally, transcription activator that recognizes two different DNA motifs: the CCAAT homology common to many promoters and the enhanced core homology common to many enhancers. Important transcription factor regulating the expression of genes involved in immune and inflammatory responses. Transcriptional activator that enhances IL6 transcription alone and as heterodimer with CEBPB. This Mus musculus (Mouse) protein is CCAAT/enhancer-binding protein delta (Cebpd).